A 248-amino-acid chain; its full sequence is Probable transcriptional regulatory protein Mnod_7401 (248 aa).

Belongs to the TACO1 family.

The protein localises to the cytoplasm. The sequence is that of Probable transcriptional regulatory protein Mnod_7401 from Methylobacterium nodulans (strain LMG 21967 / CNCM I-2342 / ORS 2060).